A 1171-amino-acid chain; its full sequence is ATP-dependent helicase/deoxyribonuclease subunit B (1171 aa).

The UvrD-like helicase ATP-binding domain maps to 1–343 (MSLRFVIGRA…LVAEENYRYR (343 aa)). ATP is bound at residue 8-15 (GRAGSGKS). A UvrD-like helicase C-terminal domain is found at 281 to 587 (MEQPRFHSPA…QFANIPPSLD (307 aa)). [4Fe-4S] cluster-binding residues include Cys-805, Cys-1129, Cys-1132, and Cys-1138.

This sequence belongs to the helicase family. AddB/RexB type 1 subfamily. As to quaternary structure, heterodimer of AddA and AddB. Mg(2+) is required as a cofactor. It depends on [4Fe-4S] cluster as a cofactor.

The heterodimer acts as both an ATP-dependent DNA helicase and an ATP-dependent, dual-direction single-stranded exonuclease. Recognizes the chi site generating a DNA molecule suitable for the initiation of homologous recombination. The AddB subunit has 5' -&gt; 3' nuclease activity but not helicase activity. The sequence is that of ATP-dependent helicase/deoxyribonuclease subunit B from Bacillus thuringiensis (strain Al Hakam).